Consider the following 2474-residue polypeptide: Polyprotein P1234 (2474 aa).

The Alphavirus-like MT domain maps to 28–257 (EATQVTDNDH…EERILLRSWH (230 aa)). Residues 242–261 (GSTIYTEERILLRSWHLPNV) form a nsP1 membrane-binding region. A lipid anchor (S-palmitoyl cysteine; by host) is attached at Cys417. In terms of domain architecture, (+)RNA virus helicase ATP-binding spans 674-839 (CVKKADAGPM…HEICTEVYHK (166 aa)). Residue 719-726 (GVPGSGKS) participates in a ribonucleoside 5'-triphosphate binding. Positions 840-988 (SISRRCTKTV…LEEWQAEHDA (149 aa)) constitute a (+)RNA virus helicase C-terminal domain. The 320-residue stretch at 1001–1320 (DVYQNKVHVC…IVLNNIYQGS (320 aa)) folds into the Peptidase C9 domain. Positions 1002–1021 (VYQNKVHVCWAKALEPVLAT) are nucleolus localization signal. The active-site For cysteine protease nsP2 activity is the Cys1010. The Nuclear export signal motif lies at 1054-1063 (TRFFGVDIDS). Catalysis depends on His1079, which acts as the For cysteine protease nsP2 activity. The Nuclear localization signal motif lies at 1177-1181 (PGKRV). Positions 1328-1486 (APAYRVIRGD…RIKDAIARKE (159 aa)) constitute a Macro domain. 6 residues coordinate ADP-D-ribose: Asp1337, Asn1351, Gly1359, Gly1438, Ile1439, and Tyr1440. Cys1589, Cys1591, Cys1614, and Cys1632 together coordinate Zn(2+). A binding to host G3BP family members region spans residues 1773-1785 (LITFDSVTDIFEN). Positions 1820–1841 (TEEKPIPKPRTRTTKYKQPPGV) are disordered. Residues 1838–1854 (PPGVARSISEAELDEFI) are binding to host FXR family members. Residues 2231–2346 (DAVLETDIAS…KGVKSDALMA (116 aa)) form the RdRp catalytic domain.

As to quaternary structure, interacts with non-structural protein 3. Interacts with RNA-directed RNA polymerase nsP4. Interacts with protease nsP2. interacts with itself. Interacts with mRNA-capping enzyme nsP1. Interacts with host DDX1. Interacts with host DDX3. Interacts (via C-terminus) with host FXR1; this interaction inhibits the formation of host stress granules on viral mRNAs and the nsp3-FXR1 complexes bind viral RNAs and probably orchestrate the assembly of viral replication complexes. Interacts (via C-terminus) with host FXR2; this interaction inhibits the formation of host stress granules on viral mRNAs and the nsp3-FXR2 complexes bind viral RNAs and probably orchestrate the assembly of viral replication complexes. Interacts (via C-terminus) with host FMR1; this interaction inhibits the formation of host stress granules on viral mRNAs and the nsp3-FMR1 complexes bind viral RNAs and probably orchestrate the assembly of viral replication complexes. Interacts (via C-terminus) with host G3BP1; this interaction inhibits the formation of host stress granules on viral mRNAs and the nsp3-G3BP1 complexes bind viral RNAs and probably orchestrate the assembly of viral replication complexes. Interacts (via C-terminus) with host G3BP2; this interaction inhibits the formation of host stress granules on viral mRNAs and the nsp3-G3BP2 complexes bind viral RNAs and probably orchestrate the assembly of viral replication complexes. In terms of assembly, interacts with mRNA-capping enzyme nsP1. Interacts with protease nsP2. interacts with itself. As to quaternary structure, interacts with RNA-directed RNA polymerase nsP4. Interacts with mRNA-capping enzyme nsP1. Interacts with KPNA1/karyopherin-alpha1; this interaction probably allows the active transport of protease nsP2 into the host nucleus. It depends on Mg(2+) as a cofactor. Mn(2+) is required as a cofactor. Specific enzymatic cleavages in vivo yield mature proteins. The processing of the polyprotein is temporally regulated. In early stages (1.7 hpi), P1234 is first cleaved in trans through its nsP2 protease activity, releasing P123' and nsP4, which associate to form the early replication complex. At the same time, P1234 is also cut at the nsP1/nsP2 site early in infection but with lower efficiency. After replication of the viral minus-strand RNAs (4 hpi), the polyproteins are cut at the nsP1/nsP2 and nsP2/nsP3 sites very efficiently, preventing accumulation of P123' and P1234 and allowing the formation of the late replication complex. NsP3'/nsP4 site is not cleaved anymore and P34 is produced rather than nsP4. In terms of processing, specific enzymatic cleavages in vivo yield mature proteins. The processing of the polyprotein is temporally regulated. In early stages (1.7 hpi), P123 is cleaved at the nsP1/nsP2 site with low efficiency. After replication of the viral minus-strand RNAs (4 hpi), the polyproteins are cut at the nsP1/nsP2 and nsP2/nsP3 sites very efficiently, preventing accumulation of P123 and allowing the formation of the late replication complex. Post-translationally, specific enzymatic cleavages in vivo yield mature proteins. The processing of the polyprotein is temporally regulated. In early stages (1.7 hpi), P123' is cleaved at the nsP1/nsP2 site with low efficiency. After replication of the viral minus-strand RNAs (4 hpi), the polyproteins are cut at the nsP1/nsP2 and nsP2/nsP3 sites very efficiently, preventing accumulation of P123' and allowing the formation of the late replication complex. Palmitoylated by host palmitoyltransferases ZDHHC2 and ZDHHC19. In terms of processing, phosphorylated by host on serines and threonines. Post-translationally, ubiquitinated; targets the protein for rapid degradation via the ubiquitin system. Nsp4 is present in extremely low quantities due to low frequency of translation through the amber stop-codon and the degradation by the ubiquitin pathway.

The protein resides in the host cytoplasmic vesicle membrane. Its subcellular location is the host cell membrane. It localises to the host cell projection. The protein localises to the host filopodium. It is found in the host nucleus. The protein resides in the host cytoplasm. It carries out the reaction GTP + S-adenosyl-L-methionine = N(7)-methyl-GTP + S-adenosyl-L-homocysteine. It catalyses the reaction N(7)-methyl-GTP + L-histidyl-[protein] = N(tele)-(N(7)-methylguanosine 5'-phospho)-L-histidyl-[protein] + diphosphate. The enzyme catalyses N(tele)-(N(7)-methylguanosine 5'-phospho)-L-histidyl-[protein] + a 5'-end diphospho-(purine-ribonucleoside) in mRNA + H(+) = a 5'-end (N(7)-methyl 5'-triphosphoguanosine)-(purine-ribonucleoside) in mRNA + L-histidyl-[protein]. The catalysed reaction is a 5'-end triphospho-ribonucleoside in mRNA + H2O = a 5'-end diphospho-ribonucleoside in mRNA + phosphate + H(+). It carries out the reaction a ribonucleoside 5'-triphosphate + H2O = a ribonucleoside 5'-diphosphate + phosphate + H(+). It catalyses the reaction ATP + H2O = ADP + phosphate + H(+). The enzyme catalyses RNA(n) + a ribonucleoside 5'-triphosphate = RNA(n+1) + diphosphate. The catalysed reaction is 4-O-(ADP-D-ribosyl)-L-aspartyl-[protein] + H2O = L-aspartyl-[protein] + ADP-D-ribose + H(+). It carries out the reaction 5-O-(ADP-D-ribosyl)-L-glutamyl-[protein] + H2O = L-glutamyl-[protein] + ADP-D-ribose + H(+). It catalyses the reaction RNA(n) + ATP = RNA(n)-3'-adenine ribonucleotide + diphosphate. The enzyme catalyses ADP-alpha-D-ribose 1''-phosphate + H2O = ADP-D-ribose + phosphate. Inhibited by sinefungin. Its function is as follows. Inactive precursor of the viral replicase, which is activated by cleavages carried out by the viral protease nsP2. In terms of biological role, the early replication complex formed by the polyprotein P123 and nsP4 synthesizes the minus-strand RNAs (antigenome). Polyprotein P123 is a short-lived polyprotein that accumulates during early stage of infection. As soon P123 is cleaved into mature proteins, the plus-strand RNAs synthesis begins. The early replication complex formed by the polyprotein P123' and nsP4 synthesizes minus-strand RNAs (antigenome). Polyprotein P123' is a short-lived polyprotein that accumulates during early stage of infection. As soon P123' is cleaved into mature proteins, the plus-strand RNAs synthesis begins. Functionally, cytoplasmic capping enzyme that catalyzes two virus-specific reactions: methyltransferase and nsP1 guanylyltransferase. mRNA-capping is necessary since all viral RNAs are synthesized in the cytoplasm, and host capping enzymes are restricted to the nucleus. The enzymatic reaction involves a covalent link between 7-methyl-GMP and nsP1, whereas eukaryotic capping enzymes form a covalent complex only with GMP. NsP1 capping consists in the following reactions: GTP is first methylated into 7-methyl-GMP and then is covalently linked to nsP1 to form the m7GMp-nsP1 complex from which 7-methyl-GMP complex is transferred to the mRNA to create the cap structure. NsP1 is also needed for the initiation of the minus-strand RNAs synthesis. Probably serves as a membrane anchor for the replication complex composed of nsP1-nsP4. Nsp1 is needed for the initiation of the minus-strand RNAs synthesis. Palmitoylated nsP1 is remodeling host cell cytoskeleton, and induces filopodium-like structure formation at the surface of the host cell. Its function is as follows. Multifunctional protein whose N-terminus is part of the RNA polymerase complex and displays NTPase, RNA triphosphatase and helicase activities. NTPase and RNA triphosphatase are involved in viral RNA capping and helicase keeps a check on the dsRNA replication intermediates. The C-terminus harbors a protease that specifically cleaves the polyproteins and releases the mature proteins. Required for the shutoff of minus-strand RNAs synthesis. Inhibits host translation to ensure maximal viral gene expression and evade host immune response. In terms of biological role, seems to be essential for minus-strand RNAs and subgenomic 26S mRNAs synthesis. Displays mono-ADP-ribosylhydrolase activity. ADP-ribosylation is a post-translational modification that controls various processes of the host cell and the virus probably needs to revert it for optimal viral replication. Binds proteins of FXR and G3BP families and sequesters them into the viral RNA replication complexes thereby inhibiting the formation of host stress granules on viral mRNAs. The nsp3-FXR and nsp3-G3BP complexes bind viral RNAs and probably orchestrate the assembly of viral replication complexes, thanks to the ability of G3BP and FXR family members to self-assemble and bind DNA. Seems to be essential for minus-strand RNAs and subgenomic 26S mRNAs synthesis. Displays mono-ADP-ribosylhydrolase activity. ADP-ribosylation is a post-translational modification that controls various processes of the host cell and the virus probably needs to revert it for optimal viral replication. Binds proteins of FXR and G3BP families and sequesters them into the viral RNA replication complexes thereby inhibiting the formation of host stress granules on viral mRNAs. The nsp3'-FXR and nsp3-G3BP complexes bind viral RNAs and probably orchestrate the assembly of viral replication complexes, thanks to the ability of G3BP and FXR family members to self-assemble and bind DNA. Functionally, RNA dependent RNA polymerase. Replicates genomic and antigenomic RNA by recognizing replications specific signals. The early replication complex formed by the polyprotein P123 and nsP4 synthesizes minus-strand RNAs. The late replication complex composed of fully processed nsP1-nsP4 is responsible for the production of genomic and subgenomic plus-strand RNAs. In Eastern equine encephalitis virus (strain PE-3.0815) (EEEV), this protein is Polyprotein P1234.